A 137-amino-acid chain; its full sequence is 2-iminobutanoate/2-iminopropanoate deaminase (137 aa).

Ser2 is modified (N-acetylserine). N6-succinyllysine is present on residues Lys13 and Lys67. Thr74 carries the phosphothreonine modification. The residue at position 136 (Ser136) is a Phosphoserine.

The protein belongs to the RutC family. Homotrimer. Interacts with YTHDF2.

The protein resides in the cytoplasm. It is found in the nucleus. The protein localises to the peroxisome. Its subcellular location is the mitochondrion. It carries out the reaction 2-iminobutanoate + H2O = 2-oxobutanoate + NH4(+). It catalyses the reaction 2-iminopropanoate + H2O = pyruvate + NH4(+). Its function is as follows. Catalyzes the hydrolytic deamination of enamine/imine intermediates that form during the course of normal metabolism. May facilitate the release of ammonia from these potentially toxic reactive metabolites, reducing their impact on cellular components. It may act on enamine/imine intermediates formed by several types of pyridoxal-5'-phosphate-dependent dehydratases including L-threonine dehydratase. Functionally, also promotes endoribonucleolytic cleavage of some transcripts by promoting recruitment of the ribonuclease P/MRP complex. Acts by bridging YTHDF2 and the ribonuclease P/MRP complex. RIDA/HRSP12 binds to N6-methyladenosine (m6A)-containing mRNAs containing a 5'-GGUUC-3' motif: cooperative binding of RIDA/HRSP12 and YTHDF2 to such transcripts lead to recruitment of the ribonuclease P/MRP complex and subsequent endoribonucleolytic cleavage. The protein is 2-iminobutanoate/2-iminopropanoate deaminase of Bos taurus (Bovine).